Here is a 93-residue protein sequence, read N- to C-terminus: Alpha-elapitoxin-Oh3a (93 aa).

A signal peptide spans 1–21 (MKTLLLTLVVVTIVCLDLGYT). 5 cysteine pairs are disulfide-bonded: Cys24–Cys42, Cys35–Cys63, Cys48–Cys52, Cys67–Cys78, and Cys79–Cys84.

The protein belongs to the three-finger toxin family. Long-chain subfamily. Type II alpha-neurotoxin sub-subfamily. Expressed by the venom gland.

The protein localises to the secreted. Its function is as follows. Binds to muscular and neuronal nicotinic acetylcholine receptor (nAChR) and inhibits acetylcholine from binding to the receptor, thereby impairing neuromuscular and neuronal transmission. Pseudo-irreversibly inhibits twitches in chick biventer cervicis nerve-muscle preparations in a concentration-dependent manner. This is Alpha-elapitoxin-Oh3a from Ophiophagus hannah (King cobra).